Here is a 115-residue protein sequence, read N- to C-terminus: Nitrogenase-stabilizing/protective protein NifW (115 aa).

This sequence belongs to the NifW family. Homotrimer; associates with NifD.

May protect the nitrogenase Fe-Mo protein from oxidative damage. This Rhodopseudomonas palustris (strain BisB18) protein is Nitrogenase-stabilizing/protective protein NifW.